The chain runs to 109 residues: Major allergen I polypeptide chain 2 (109 aa).

An N-terminal signal peptide occupies residues 1 to 17 (MRGALLVLALLVTQALG). Asn-50 carries N-linked (GlcNAc...) asparagine glycosylation.

The protein belongs to the secretoglobin family. Heterotetramer composed of two non-covalently linked disulfide-linked heterodimer of chains 1 and 2. In terms of tissue distribution, the long form is preferentially expressed in the salivary gland, while the short form is preferentially expressed in the skin.

The protein localises to the secreted. The protein is Major allergen I polypeptide chain 2 (CH2) of Felis catus (Cat).